Consider the following 151-residue polypeptide: HTH-type transcriptional regulator FL11 (151 aa).

The HTH asnC-type domain maps to 5–66; it reads LDDIDKKIIE…VVNPEALGYN (62 aa). Positions 24-43 form a DNA-binding region, H-T-H motif; that stretch reads LREISKITGLAESTIHERIK. An L-arginine-binding site is contributed by 98–104; the sequence is ETTGDYD. L-lysine contacts are provided by residues Asn118, Asp122, and 133–135; that span reads THT. L-arginine-binding positions include Asp122 and 133-135; that span reads THT.

As to quaternary structure, homodimer. Binds DNA as a dimer and an octamer.

Its activity is regulated as follows. In the famine mode, FL11 forms dimers and acts as a repressor, leading to growth arrest. In the feast mode, in the presence of high concentrations of lysine or arginine, four dimers assemble into an octamer and cover the fl11 and lysine biosynthesis promoters. This leads to the inhibition of fl11 expression and lysine biosynthesis, decrease of the FL11 concentration in the cell, derepression of the target genes and activation of the metabolism. Functionally, DNA-binding protein involved in the repression of transcription of a large number of genes, thereby arresting growth, in response to environmental changes. In Pyrococcus furiosus (strain ATCC 43587 / DSM 3638 / JCM 8422 / Vc1), this protein is HTH-type transcriptional regulator FL11.